Consider the following 698-residue polypeptide: Long-chain-fatty-acid--CoA ligase 1 (698 aa).

At Met1 the chain carries N-acetylmethionine. Tyr9 carries the post-translational modification 3'-nitrotyrosine. Residues 25 to 45 (LPTNTLMGFGAFAALTTFWYA) traverse the membrane as a helical; Signal-anchor for type III membrane protein segment. Over 46–698 (TRPKPLKPPC…IDDLYSTIKV (653 aa)) the chain is Cytoplasmic. At Tyr84 the chain carries Phosphotyrosine. Ser135 carries O-linked (GlcNAc) serine glycosylation. N6-acetyllysine is present on residues Lys207, Lys356, and Lys386. Ser620 bears the Phosphoserine mark. Lys632 carries the N6-acetyllysine modification.

Belongs to the ATP-dependent AMP-binding enzyme family. It depends on Mg(2+) as a cofactor. As to expression, highly expressed in liver, heart, skeletal muscle, kidney and erythroid cells, and to a lesser extent in brain, lung, placenta and pancreas.

It is found in the mitochondrion outer membrane. Its subcellular location is the peroxisome membrane. The protein resides in the microsome membrane. The protein localises to the endoplasmic reticulum membrane. The catalysed reaction is a long-chain fatty acid + ATP + CoA = a long-chain fatty acyl-CoA + AMP + diphosphate. The enzyme catalyses (5Z,8Z,11Z,14Z)-eicosatetraenoate + ATP + CoA = (5Z,8Z,11Z,14Z)-eicosatetraenoyl-CoA + AMP + diphosphate. It carries out the reaction 3,7,11,15-tetramethylhexadecanoate + ATP + CoA = phytanoyl-CoA + AMP + diphosphate. It catalyses the reaction hexadecanoate + ATP + CoA = hexadecanoyl-CoA + AMP + diphosphate. The catalysed reaction is (E)-hexadec-2-enoate + ATP + CoA = (2E)-hexadecenoyl-CoA + AMP + diphosphate. The enzyme catalyses 2,6,10,14-tetramethylpentadecanoate + ATP + CoA = pristanoyl-CoA + AMP + diphosphate. It carries out the reaction 14,15-epoxy-(5Z,8Z,11Z)-eicosatrienoate + ATP + CoA = 14,15-epoxy-(5Z,8Z,11Z)-eicosatrienoyl-CoA + AMP + diphosphate. It catalyses the reaction 5-hydroxy-(6E,8Z,11Z,14Z)-eicosatetraenoate + ATP + CoA = 5-hydroxy-(6E,8Z,11Z,14Z)-eicosatetraenoyl-CoA + AMP + diphosphate. The catalysed reaction is 12-hydroxy-(5Z,8Z,10E,14Z)-eicosatetraenoate + ATP + CoA = 12-hydroxy-(5Z,8Z,10E,14Z)-eicosatetraenoyl-CoA + AMP + diphosphate. The enzyme catalyses 15-hydroxy-(5Z,8Z,11Z,13E)-eicosatetraenoate + ATP + CoA = 15-hydroxy-(5Z,8Z,11Z,13E)-eicosatetraenoyl-CoA + AMP + diphosphate. It carries out the reaction (9Z)-octadecenoate + ATP + CoA = (9Z)-octadecenoyl-CoA + AMP + diphosphate. Its activity is regulated as follows. Inhibited at high temperature and by arachidonate. In terms of biological role, catalyzes the conversion of long-chain fatty acids to their active form acyl-CoAs for both synthesis of cellular lipids, and degradation via beta-oxidation. Preferentially uses palmitoleate, oleate and linoleate. Preferentially activates arachidonate than epoxyeicosatrienoic acids (EETs) or hydroxyeicosatrienoic acids (HETEs). The chain is Long-chain-fatty-acid--CoA ligase 1 from Homo sapiens (Human).